Here is a 281-residue protein sequence, read N- to C-terminus: Protoheme IX farnesyltransferase (281 aa).

Helical transmembrane passes span Thr-16–Phe-36, Phe-38–Trp-58, Val-75–Ile-95, Phe-101–Val-121, Lys-129–Trp-149, Val-150–Ile-170, Ala-202–Leu-224, Ile-228–Leu-250, and Tyr-261–Leu-281.

It belongs to the UbiA prenyltransferase family. Protoheme IX farnesyltransferase subfamily.

It is found in the cell membrane. The enzyme catalyses heme b + (2E,6E)-farnesyl diphosphate + H2O = Fe(II)-heme o + diphosphate. The protein operates within porphyrin-containing compound metabolism; heme O biosynthesis; heme O from protoheme: step 1/1. Functionally, converts heme B (protoheme IX) to heme O by substitution of the vinyl group on carbon 2 of heme B porphyrin ring with a hydroxyethyl farnesyl side group. This Archaeoglobus fulgidus (strain ATCC 49558 / DSM 4304 / JCM 9628 / NBRC 100126 / VC-16) protein is Protoheme IX farnesyltransferase.